The following is a 327-amino-acid chain: Methionine import ATP-binding protein MetN (327 aa).

The region spanning 3-239 (VELKNIEKIY…PKHAVTKELL (237 aa)) is the ABC transporter domain. 36-43 (GYSGAGKS) is an ATP binding site.

It belongs to the ABC transporter superfamily. Methionine importer (TC 3.A.1.24) family. As to quaternary structure, the complex is composed of two ATP-binding proteins (MetN), two transmembrane proteins (MetI) and a solute-binding protein (MetQ).

It localises to the cell inner membrane. The catalysed reaction is L-methionine(out) + ATP + H2O = L-methionine(in) + ADP + phosphate + H(+). It carries out the reaction D-methionine(out) + ATP + H2O = D-methionine(in) + ADP + phosphate + H(+). In terms of biological role, part of the ABC transporter complex MetNIQ involved in methionine import. Responsible for energy coupling to the transport system. In Helicobacter pylori (strain J99 / ATCC 700824) (Campylobacter pylori J99), this protein is Methionine import ATP-binding protein MetN.